We begin with the raw amino-acid sequence, 284 residues long: 2-dehydro-3-deoxyphosphooctonate aldolase (284 aa).

Belongs to the KdsA family.

Its subcellular location is the cytoplasm. It carries out the reaction D-arabinose 5-phosphate + phosphoenolpyruvate + H2O = 3-deoxy-alpha-D-manno-2-octulosonate-8-phosphate + phosphate. Its pathway is carbohydrate biosynthesis; 3-deoxy-D-manno-octulosonate biosynthesis; 3-deoxy-D-manno-octulosonate from D-ribulose 5-phosphate: step 2/3. It participates in bacterial outer membrane biogenesis; lipopolysaccharide biosynthesis. This Photobacterium profundum (strain SS9) protein is 2-dehydro-3-deoxyphosphooctonate aldolase.